The sequence spans 324 residues: Glyoxylate/hydroxypyruvate reductase B (324 aa).

Residues arginine 237 and glutamate 266 contribute to the active site. Histidine 285 (proton donor) is an active-site residue.

This sequence belongs to the D-isomer specific 2-hydroxyacid dehydrogenase family. GhrB subfamily. In terms of assembly, homodimer.

It localises to the cytoplasm. It catalyses the reaction glycolate + NADP(+) = glyoxylate + NADPH + H(+). It carries out the reaction (R)-glycerate + NAD(+) = 3-hydroxypyruvate + NADH + H(+). The enzyme catalyses (R)-glycerate + NADP(+) = 3-hydroxypyruvate + NADPH + H(+). In terms of biological role, catalyzes the NADPH-dependent reduction of glyoxylate and hydroxypyruvate into glycolate and glycerate, respectively. The protein is Glyoxylate/hydroxypyruvate reductase B of Escherichia coli O17:K52:H18 (strain UMN026 / ExPEC).